The chain runs to 1170 residues: Putative DNA topoisomerase 2, mitochondrial (1170 aa).

Residues asparagine 106, asparagine 135, 163–165, 176–183, and 396–398 each bind ATP; these read SSN, GRNGYGAK, and QTK. Residues 475–590 form the Toprim domain; that stretch reads CTLILTEGDS…SLVHTDGFIQ (116 aa). Mg(2+) is bound by residues glutamate 481, aspartate 559, and aspartate 561. The Topo IIA-type catalytic domain maps to 722-1157; that stretch reads IPSLIDGLKP…DWKSVWRSEL (436 aa). Tyrosine 813 (O-(5'-phospho-DNA)-tyrosine intermediate) is an active-site residue.

It belongs to the type II topoisomerase family. As to quaternary structure, homodimer. Mg(2+) serves as cofactor. Mn(2+) is required as a cofactor. The cofactor is Ca(2+).

It localises to the mitochondrion. The catalysed reaction is ATP-dependent breakage, passage and rejoining of double-stranded DNA.. Its function is as follows. Control of topological states of DNA by transient breakage and subsequent rejoining of DNA strands. Topoisomerase II makes double-strand breaks. The protein is Putative DNA topoisomerase 2, mitochondrial of Caenorhabditis elegans.